We begin with the raw amino-acid sequence, 694 residues long: TBC1 domain family member 14 (694 aa).

At S92 the chain carries Phosphoserine. Basic and acidic residues predominate over residues T272–G289. The disordered stretch occupies residues T272–L305. A Phosphoserine modification is found at S296. Positions G402 to G612 constitute a Rab-GAP TBC domain.

Interacts with ULK1. May interact with RAB11A and RAB11B, but does not exhibit any GTPase-activating activity toward these proteins. Interacts with TRAPPC8.

It is found in the golgi apparatus. Its subcellular location is the cis-Golgi network. The protein resides in the trans-Golgi network. Functionally, plays a role in the regulation of starvation-induced autophagosome formation. Together with the TRAPPIII complex, regulates a constitutive trafficking step from peripheral recycling endosomes to the early Golgi, maintaining the cycling pool of ATG9 required for initiation of autophagy. The sequence is that of TBC1 domain family member 14 (Tbc1d14) from Mus musculus (Mouse).